A 191-amino-acid chain; its full sequence is Fe/S biogenesis protein NfuA (191 aa).

2 residues coordinate [4Fe-4S] cluster: C149 and C152.

This sequence belongs to the NfuA family. In terms of assembly, homodimer. It depends on [4Fe-4S] cluster as a cofactor.

Its function is as follows. Involved in iron-sulfur cluster biogenesis. Binds a 4Fe-4S cluster, can transfer this cluster to apoproteins, and thereby intervenes in the maturation of Fe/S proteins. Could also act as a scaffold/chaperone for damaged Fe/S proteins. This Pseudoalteromonas translucida (strain TAC 125) protein is Fe/S biogenesis protein NfuA.